Consider the following 632-residue polypeptide: Polyadenylate-binding protein, cytoplasmic and nuclear (632 aa).

The span at 1–11 shows a compositional bias: polar residues; the sequence is MSAADANQLQE. Residues 1–43 are disordered; sequence MSAADANQLQESLEKLNLDSAPAAAEEEAVAAESAPAGEEGAD. Residues 31-43 show a composition bias toward low complexity; sequence AAESAPAGEEGAD. 4 RRM domains span residues 52–130, 140–217, 233–310, and 336–413; these read ASLY…WSQR, GNIF…KHIS, TNIY…RAQK, and VNLF…LAQR. One can recognise a PABC domain in the interval 534–615; the sequence is QQRDLAAIIA…ALTAFEEYKN (82 aa).

This sequence belongs to the polyadenylate-binding protein type-1 family.

The protein resides in the cytoplasm. The protein localises to the nucleus. Binds the poly(A) tail of mRNA. Appears to be an important mediator of the multiple roles of the poly(A) tail in mRNA biogenesis, stability and translation. In the nucleus, involved in both mRNA cleavage and polyadenylation. Is also required for efficient mRNA export to the cytoplasm. Acts in concert with a poly(A)-specific nuclease (PAN) to affect poly(A) tail shortening, which may occur concomitantly with either nucleocytoplasmic mRNA transport or translational initiation. In the cytoplasm, stimulates translation initiation and regulates mRNA decay through translation termination-coupled poly(A) shortening, probably mediated by PAN. This is Polyadenylate-binding protein, cytoplasmic and nuclear (PAB1) from Scheffersomyces stipitis (strain ATCC 58785 / CBS 6054 / NBRC 10063 / NRRL Y-11545) (Yeast).